A 228-amino-acid polypeptide reads, in one-letter code: Heptaprenylglyceryl phosphate synthase (228 aa).

Sn-glycerol 1-phosphate is bound at residue Lys-12. Mg(2+) contacts are provided by Asp-14 and Ser-40. Sn-glycerol 1-phosphate contacts are provided by residues 158–163, Gly-188, and 208–209; these read YLEYSG and GN.

This sequence belongs to the GGGP/HepGP synthase family. Group I subfamily. Homodimer. It depends on Mg(2+) as a cofactor.

It carries out the reaction sn-glycerol 1-phosphate + all-trans-heptaprenyl diphosphate = 3-heptaprenyl-sn-glycero-1-phosphate + diphosphate. The protein operates within membrane lipid metabolism; glycerophospholipid metabolism. Prenyltransferase that catalyzes in vivo the transfer of the heptaprenyl moiety of heptaprenyl pyrophosphate (HepPP; 35 carbon atoms) to the C3 hydroxyl of sn-glycerol-1-phosphate (G1P), producing heptaprenylglyceryl phosphate (HepGP). This reaction is an ether-bond-formation step in the biosynthesis of archaea-type G1P-based membrane lipids found in Bacillales. To a much lesser extent, is also able to use geranyl diphosphate (GPP; C10) and geranylgeranyl diphosphate (GGPP; C20) as the prenyl donors, but not farnesyl pyrophosphate (FPP; C15). Cannot use glycerol-3-phosphate (G3P) or 3-phosphoglycerate (3PG) as an acceptor. This chain is Heptaprenylglyceryl phosphate synthase, found in Bacillus subtilis (strain 168).